The chain runs to 216 residues: Pyrophosphatase PpaX (216 aa).

The Nucleophile role is filled by D9.

This sequence belongs to the HAD-like hydrolase superfamily. PpaX family. It depends on Mg(2+) as a cofactor.

It carries out the reaction diphosphate + H2O = 2 phosphate + H(+). Its function is as follows. Hydrolyzes pyrophosphate formed during P-Ser-HPr dephosphorylation by HPrK/P. Might play a role in controlling the intracellular pyrophosphate pool. This chain is Pyrophosphatase PpaX, found in Bacillus anthracis (strain CDC 684 / NRRL 3495).